The following is a 511-amino-acid chain: Glutamate/gamma-aminobutyrate antiporter (511 aa).

The Cytoplasmic portion of the chain corresponds to 1–14; the sequence is MATLVQTGKAKQLT. A helical transmembrane segment spans residues 15 to 35; it reads LLGFFAITASMVMAVYEYPTF. The Periplasmic segment spans residues 36–41; that stretch reads ATSGFS. The helical transmembrane segment at 42–62 threads the bilayer; sequence LVFFLLLGGILWFIPVGLCAA. The Cytoplasmic segment spans residues 63–93; the sequence is EMATVDGWEEGGVFAWVSNTLGPRWGFAAIS. The chain crosses the membrane as a helical span at residues 94–114; the sequence is FGYLQIAIGFIPMLYFVLGAL. Residues 115-127 lie on the Periplasmic side of the membrane; the sequence is SYILKWPALNEDP. Residues 128-148 form a helical membrane-spanning segment; the sequence is ITKTIAALIILWALALTQFGG. Topologically, residues 149 to 157 are cytoplasmic; that stretch reads TKYTARIAK. Residues 158-178 form a helical membrane-spanning segment; the sequence is VGFFAGILLPAFILIALAAIY. Residues 179-200 lie on the Periplasmic side of the membrane; it reads LHSGAPVAIEMDSKTFFPDFSK. A helical transmembrane segment spans residues 201–221; sequence VGTLVVFVAFILSYMGVEASA. The Cytoplasmic portion of the chain corresponds to 222-239; sequence THVNEMSNPGRDYPLAML. The helical transmembrane segment at 240–260 threads the bilayer; that stretch reads LLMVAAICLSSVGGLSIAMVI. The Periplasmic portion of the chain corresponds to 261-291; it reads PGNEINLSAGVMQTFTVLMSHVAPEIEWTVR. A helical membrane pass occupies residues 292–312; it reads VISALLLLGVLAEIASWIVGP. The Cytoplasmic portion of the chain corresponds to 313 to 335; sequence SRGMYVTAQKNLLPAAFAKMNKN. A helical membrane pass occupies residues 336-356; that stretch reads GVPVTLVISQLVITSIALIIL. Residues 357–366 are Periplasmic-facing; that stretch reads TNTGGGNNMS. The helical transmembrane segment at 367 to 387 threads the bilayer; it reads FLIALALTVVIYLCAYFMLFI. Residues 388–412 are Cytoplasmic-facing; sequence GYIVLVLKHPDLKRTFNIPGGKGVK. Residues 413-433 form a helical membrane-spanning segment; that stretch reads LVVAIVGLLTSIMAFIVSFLP. At 434-445 the chain is on the periplasmic side; the sequence is PDNIQGDSTDMY. A helical transmembrane segment spans residues 446–466; sequence VELLVVSFLVVLALPFILYAV. Over 467 to 511 the chain is Cytoplasmic; that stretch reads HDRKGKANTGVTLEPINSQNAPKGHFFLHPRARSPHYIVMNDKKH.

The protein belongs to the amino acid-polyamine-organocation (APC) superfamily. Glutamate:GABA antiporter (GGA) (TC 2.A.3.7) family.

The protein resides in the cell inner membrane. The catalysed reaction is 4-aminobutanoate(in) + L-glutamate(out) = 4-aminobutanoate(out) + L-glutamate(in). Its activity is regulated as follows. Shows pH-dependent activity. The glutamate analog L-trans-pyrrolidine-2,4-dicarboxylic acid (L-PDC) blocks the uptake of glutamate by selective inhibition. In terms of biological role, involved in glutaminase-dependent acid resistance. Exchanges extracellular glutamate (Glu) for intracellular gamma-aminobutyric acid (GABA) under acidic conditions. The ability to survive the extremely acidic conditions of the stomach is essential for successful colonization of the host by commensal and pathogenic bacteria. The chain is Glutamate/gamma-aminobutyrate antiporter (gadC) from Escherichia coli O157:H7.